Here is a 2174-residue protein sequence, read N- to C-terminus: Mediator of RNA polymerase II transcription subunit 13 (2174 aa).

Position 395 is a phosphoserine (serine 395). The segment at 435 to 477 is disordered; that stretch reads RNAGQQGQAPSLGQQQQILPKHKTNEKQEKSEKPQKRPLTPFH. The span at 438 to 451 shows a compositional bias: low complexity; the sequence is GQQGQAPSLGQQQQ. Positions 457–469 are enriched in basic and acidic residues; the sequence is KTNEKQEKSEKPQ. Phosphoserine occurs at positions 500, 504, 530, and 537. Positions 709-730 are enriched in basic and acidic residues; that stretch reads FPDKKDRQNSEREAGKKHKVED. Disordered regions lie at residues 709-735, 749-769, and 787-816; these read FPDK…TSSV, SPSI…PSTS, and FNSD…ESKT. Basic and acidic residues predominate over residues 805–815; it reads SDDKASCKESK. A phosphoserine mark is found at serine 826 and serine 890. The tract at residues 959–1054 is disordered; the sequence is FIKEGDGSNM…ASTPSTCRPL (96 aa). A compositionally biased stretch (low complexity) spans 992–1003; sequence PPSNSGAGILPS. Positions 1004-1015 are enriched in pro residues; sequence PSTPRFPTPRTP. Serine 1029 bears the Phosphoserine mark. The segment covering 1040–1053 has biased composition (polar residues); it reads DLYSPASTPSTCRP. 2 short sequence motifs (LXXLL motif) span residues 1188-1192 and 1279-1283; these read LILLL and LRMLL. Composition is skewed to polar residues over residues 1484-1498 and 1563-1606; these read SQSL…NTGN and SMNS…SLPT. Disordered regions lie at residues 1484–1505, 1557–1617, and 2015–2048; these read SQSL…PSAT, SFPP…ESTM, and LPAS…RLLS.

This sequence belongs to the Mediator complex subunit 13 family. As to quaternary structure, component of the Mediator complex, which is composed of MED1, MED4, MED6, MED7, MED8, MED9, MED10, MED11, MED12, MED13, MED13L, MED14, MED15, MED16, MED17, MED18, MED19, MED20, MED21, MED22, MED23, MED24, MED25, MED26, MED27, MED29, MED30, MED31, CCNC, CDK8 and CDC2L6/CDK11. The MED12, MED13, CCNC and CDK8 subunits form a distinct module termed the CDK8 module. Mediator containing the CDK8 module is less active than Mediator lacking this module in supporting transcriptional activation. Individual preparations of the Mediator complex lacking one or more distinct subunits have been variously termed ARC, CRSP, DRIP, PC2, SMCC and TRAP. In terms of tissue distribution, ubiquitous.

The protein resides in the nucleus. Functionally, component of the Mediator complex, a coactivator involved in the regulated transcription of nearly all RNA polymerase II-dependent genes. Mediator functions as a bridge to convey information from gene-specific regulatory proteins to the basal RNA polymerase II transcription machinery. Mediator is recruited to promoters by direct interactions with regulatory proteins and serves as a scaffold for the assembly of a functional preinitiation complex with RNA polymerase II and the general transcription factors. The protein is Mediator of RNA polymerase II transcription subunit 13 of Homo sapiens (Human).